Consider the following 408-residue polypeptide: Probable 2,3-bisphosphoglycerate-independent phosphoglycerate mutase (408 aa).

Belongs to the BPG-independent phosphoglycerate mutase family. A-PGAM subfamily.

It carries out the reaction (2R)-2-phosphoglycerate = (2R)-3-phosphoglycerate. It functions in the pathway carbohydrate degradation; glycolysis; pyruvate from D-glyceraldehyde 3-phosphate: step 3/5. In terms of biological role, catalyzes the interconversion of 2-phosphoglycerate and 3-phosphoglycerate. The polypeptide is Probable 2,3-bisphosphoglycerate-independent phosphoglycerate mutase (Deinococcus geothermalis (strain DSM 11300 / CIP 105573 / AG-3a)).